Consider the following 150-residue polypeptide: 6,7-dimethyl-8-ribityllumazine synthase (150 aa).

Residues Phe-11, 43–45 (VYD), and 67–69 (AVI) contribute to the 5-amino-6-(D-ribitylamino)uracil site. 72 to 73 (AT) serves as a coordination point for (2S)-2-hydroxy-3-oxobutyl phosphate. His-75 functions as the Proton donor in the catalytic mechanism. Residue Leu-100 participates in 5-amino-6-(D-ribitylamino)uracil binding. (2S)-2-hydroxy-3-oxobutyl phosphate is bound at residue Arg-115.

It belongs to the DMRL synthase family.

It carries out the reaction (2S)-2-hydroxy-3-oxobutyl phosphate + 5-amino-6-(D-ribitylamino)uracil = 6,7-dimethyl-8-(1-D-ribityl)lumazine + phosphate + 2 H2O + H(+). It functions in the pathway cofactor biosynthesis; riboflavin biosynthesis; riboflavin from 2-hydroxy-3-oxobutyl phosphate and 5-amino-6-(D-ribitylamino)uracil: step 1/2. Its function is as follows. Catalyzes the formation of 6,7-dimethyl-8-ribityllumazine by condensation of 5-amino-6-(D-ribitylamino)uracil with 3,4-dihydroxy-2-butanone 4-phosphate. This is the penultimate step in the biosynthesis of riboflavin. The chain is 6,7-dimethyl-8-ribityllumazine synthase from Pyrobaculum neutrophilum (strain DSM 2338 / JCM 9278 / NBRC 100436 / V24Sta) (Thermoproteus neutrophilus).